We begin with the raw amino-acid sequence, 285 residues long: MNTFQMRDKLKERLSHLDVDFKFNREEETLRIYRTDNNKGITIKLNAIVAKYEDKKEKIVDEIVYYVDEAIAQMADKTLESISSSQIMPVIRATSFDKKTKQGVPFIYDEHTAETAVYYAVDLGKSYRLIDESMLEDLKLTEQQIREMSLFNVRKLSNSYTTDEVKGNIFYFINSNDGYDASRILNTAFLNEIEAQCQGEMLVAVPHQDVLIIADIRNKTGYDVMAHLTMEFFTKGLVPITSLSFGYKQGHLEPIFILGKNNKQKRDPNVIQRLEANRRKFDKDK.

The protein belongs to the UPF0354 family.

The protein is UPF0354 protein SACOL1793 of Staphylococcus aureus (strain COL).